The sequence spans 282 residues: Transcription repressor OFP18 (282 aa).

Residues 1 to 85 form a disordered region; sequence MVRKMKLPFL…YSSFSSTSHA (85 aa). Over residues 15-35 the composition is skewed to low complexity; sequence SSSSFSSNSSSSSSSWPWPSS. A compositionally biased stretch (polar residues) spans 36–47; the sequence is HQQNLKTISSKA. A compositionally biased stretch (low complexity) spans 66–85; sequence SFSSSPSSSSYSSFSSTSHA. Residues 139-199 form the OVATE domain; that stretch reads LSLESNDPYT…FAAFVDLVLN (61 aa).

As to expression, expressed in roots and shoots.

The protein resides in the nucleus. Functionally, transcriptional repressor that regulates multiple aspects of plant growth and development through the regulation of BEL1-LIKE (BLH) and KNOX TALE (KNAT) homeodomain transcription factors. This is Transcription repressor OFP18 (OFP18) from Arabidopsis thaliana (Mouse-ear cress).